The chain runs to 122 residues: Large ribosomal subunit protein uL14c (122 aa).

This sequence belongs to the universal ribosomal protein uL14 family. In terms of assembly, part of the 50S ribosomal subunit.

It localises to the plastid. The protein localises to the chloroplast. In terms of biological role, binds to 23S rRNA. This is Large ribosomal subunit protein uL14c from Chloranthus spicatus (Chulantree).